Consider the following 364-residue polypeptide: Mannose-1-phosphate guanyltransferase (364 aa).

This sequence belongs to the transferase hexapeptide repeat family.

Its subcellular location is the cytoplasm. It carries out the reaction alpha-D-mannose 1-phosphate + GTP + H(+) = GDP-alpha-D-mannose + diphosphate. It functions in the pathway nucleotide-sugar biosynthesis; GDP-alpha-D-mannose biosynthesis; GDP-alpha-D-mannose from alpha-D-mannose 1-phosphate (GTP route): step 1/1. Functionally, involved in cell wall synthesis where it is required for glycosylation. Involved in cell cycle progression through cell-size checkpoint. The chain is Mannose-1-phosphate guanyltransferase (mpg1) from Hypocrea jecorina (Trichoderma reesei).